Consider the following 78-residue polypeptide: UPF0335 protein RrIowa_0193 (78 aa).

It belongs to the UPF0335 family.

The sequence is that of UPF0335 protein RrIowa_0193 from Rickettsia rickettsii (strain Iowa).